The following is a 375-amino-acid chain: Secreted LysM effector Vd4LysM (375 aa).

An N-terminal signal peptide occupies residues 1-24 (MPSVTISSTMLAGLLLMLVPASSA). A LysM 1 domain is found at 57 to 104 (SWWWDNEGQIPCANMPAEWGITMQDFLRWNPSITSSCGNFLNGRSYCV). The segment at 108-139 (GEEPPVPGTPTTTTAPATTTKPSNGITTPQPI) is disordered. A compositionally biased stretch (low complexity) spans 116-129 (TPTTTTAPATTTKP). One can recognise a LysM 2 domain in the interval 149–195 (KFHYISEGDRCQDILSYQKITLADFFKWNPAVKSDCSGLWSKTNACV). Residues 206–217 (TTTTKPATPTTP) show a composition bias toward low complexity. The segment at 206-225 (TTTTKPATPTTPSNGITTPQ) is disordered. In terms of domain architecture, LysM 3 spans 237–283 (KFHYISEGDRCQDILSYQKITQADFFKWNPAVKSDCSGLWSKTHACV). The segment at 287–317 (GGQAPPPTPTTTKPTTTKPPGNGVTTPTPTQ) is disordered. The span at 296–317 (TTTKPTTTKPPGNGVTTPTPTQ) shows a compositional bias: low complexity. Residues 326–372 (KFHFVSPGNTCQQIVSYQKITMANFVKWNSGAGSGCNNLWGNTHACV) form the LysM 4 domain.

This sequence belongs to the secreted LysM effector family.

In terms of biological role, might have a role in sequestration of chitin oligosaccharides (breakdown products of fungal cell walls that are released during invasion and act as triggers of host immunity) to dampen host defense. Does not play an important role during host colonization. The polypeptide is Secreted LysM effector Vd4LysM (Verticillium dahliae (strain VdLs.17 / ATCC MYA-4575 / FGSC 10137) (Verticillium wilt)).